The chain runs to 487 residues: Lysophospholipid acyltransferase 5 (487 aa).

Ala-2 carries the post-translational modification N-acetylalanine. Helical transmembrane passes span 44-64 (LIFS…YLFY), 84-104 (FNFG…FLIL), 111-131 (VTAV…GYYY), and 180-200 (GVPS…FLVG). A glycan (N-linked (GlcNAc...) asparagine) is linked at Asn-225. A run of 2 helical transmembrane segments spans residues 236–256 (LGLV…DDYL) and 285–305 (VTCW…FNGF). 2 N-linked (GlcNAc...) asparagine glycosylation sites follow: Asn-308 and Asn-331. Catalysis depends on residues Asn-338 and His-374. Helical transmembrane passes span 364–384 (GLSL…LICF), 422–442 (LVQQ…FCLF), and 453–473 (SIYF…PYIH). The Di-lysine motif signature appears at 484 to 487 (KKRE).

This sequence belongs to the membrane-bound acyltransferase family. In terms of tissue distribution, detected ubiquitously, with high expression levels in small intestine, brown adipose tissue, liver, kidney and testis. Expressed in liver and both proximal and distal small intestine (at protein level). Expressed in peritoneal macrophages.

The protein resides in the endoplasmic reticulum membrane. It carries out the reaction a 1-acyl-sn-glycero-3-phosphocholine + an acyl-CoA = a 1,2-diacyl-sn-glycero-3-phosphocholine + CoA. The enzyme catalyses a 1-acyl-sn-glycero-3-phosphoethanolamine + an acyl-CoA = a 1,2-diacyl-sn-glycero-3-phosphoethanolamine + CoA. It catalyses the reaction a 1-acyl-sn-glycero-3-phospho-L-serine + an acyl-CoA = a 1,2-diacyl-sn-glycero-3-phospho-L-serine + CoA. The catalysed reaction is (9Z,12Z)-octadecadienoyl-CoA + a 1-acyl-sn-glycero-3-phosphocholine = 1-acyl-2-(9Z,12Z)-octadecadienoyl-sn-glycero-3-phosphocholine + CoA. It carries out the reaction (5Z,8Z,11Z,14Z)-eicosatetraenoyl-CoA + a 1-acyl-sn-glycero-3-phosphocholine = 1-acyl-2-(5Z,8Z,11Z,14Z-eicosatetraenoyl)-sn-glycero-3-phosphocholine + CoA. The enzyme catalyses dodecanoyl-CoA + 1-hexadecanoyl-sn-glycero-3-phosphocholine = 1-hexadecanoyl-2-dodecanoyl-sn-glycero-3-phosphocholine + CoA. It catalyses the reaction octadecanoyl-CoA + 1-hexadecanoyl-sn-glycero-3-phosphocholine = 1-hexadecanoyl-2-octadecanoyl-sn-glycero-3-phosphocholine + CoA. The catalysed reaction is 1-dodecanoyl-sn-glycero-3-phosphocholine + hexadecanoyl-CoA = 1-dodecanoyl-2-hexadecanoyl-sn-glycero-3-phosphocholine + CoA. It carries out the reaction 1-tetradecanoyl-sn-glycero-3-phosphocholine + hexadecanoyl-CoA = 1-tetradecanoyl-2-hexadecanoyl-sn-glycero-3-phosphocholine + CoA. The enzyme catalyses 1-hexadecanoyl-sn-glycero-3-phosphocholine + hexadecanoyl-CoA = 1,2-dihexadecanoyl-sn-glycero-3-phosphocholine + CoA. It catalyses the reaction 1-octadecanoyl-sn-glycero-3-phosphocholine + hexadecanoyl-CoA = 1-octadecanoyl-2-hexadecanoyl-sn-glycero-3-phosphocholine + CoA. The catalysed reaction is 1-(9Z-octadecenoyl)-sn-glycero-3-phosphocholine + hexadecanoyl-CoA = 1-(9Z-octadecenoyl)-2-hexadecanoyl-sn-glycero-3-phosphocholine + CoA. It carries out the reaction (9Z)-hexadecenoyl-CoA + 1-hexadecanoyl-sn-glycero-3-phosphocholine = 1-hexadecanoyl-2-(9Z-hexadecenoyl)-sn-glycero-3-phosphocholine + CoA. The enzyme catalyses 1-hexadecanoyl-sn-glycero-3-phosphocholine + (9Z)-octadecenoyl-CoA = 1-hexadecanoyl-2-(9Z-octadecenoyl)-sn-glycero-3-phosphocholine + CoA. It catalyses the reaction (9Z,12Z)-octadecadienoyl-CoA + 1-hexadecanoyl-sn-glycero-3-phosphocholine = 1-hexadecanoyl-2-(9Z,12Z-octadecadienoyl)-sn-glycero-3-phosphocholine + CoA. The catalysed reaction is 1-dodecanoyl-sn-glycero-3-phosphocholine + (5Z,8Z,11Z,14Z)-eicosatetraenoyl-CoA = 1-dodecanoyl-2-(5Z,8Z,11Z,14Z)-eicosatetraenoyl-sn-glycero-3-phosphocholine + CoA. It carries out the reaction (5Z,8Z,11Z,14Z)-eicosatetraenoyl-CoA + 1-hexadecanoyl-sn-glycero-3-phosphocholine = 1-hexadecanoyl-2-(5Z,8Z,11Z,14Z-eicosatetraenoyl)-sn-glycero-3-phosphocholine + CoA. The enzyme catalyses 1-octadecanoyl-sn-glycero-3-phosphocholine + (5Z,8Z,11Z,14Z)-eicosatetraenoyl-CoA = 1-octadecanoyl-2-(5Z,8Z,11Z,14Z-eicosatetraenoyl)-sn-glycero-3-phosphocholine + CoA. It catalyses the reaction 1-eicosanoyl-sn-glycero-3-phosphocholine + (5Z,8Z,11Z,14Z)-eicosatetraenoyl-CoA = 1-eicosanoyl-2-(5Z,8Z,11Z,14Z)-eicosatetraenoyl-sn-glycero-3-phosphocholine + CoA. The catalysed reaction is 1-(9Z-octadecenoyl)-sn-glycero-3-phosphocholine + (9Z)-octadecenoyl-CoA = 1,2-di-(9Z-octadecenoyl)-sn-glycero-3-phosphocholine + CoA. It carries out the reaction 1-(9Z-octadecenoyl)-sn-glycero-3-phosphocholine + (9Z,12Z)-octadecadienoyl-CoA = 1-(9Z)-octadecenoyl-2-(9Z,12Z)-octadecadienoyl-sn-glycero-3-phosphocholine + CoA. The enzyme catalyses 1-(9Z-octadecenoyl)-sn-glycero-3-phosphocholine + (5Z,8Z,11Z,14Z)-eicosatetraenoyl-CoA = 1-(9Z)-octadecenoyl-2-(5Z,8Z,11Z,14Z)-icosatetraenoyl-sn-glycero-3-phosphocholine + CoA. It catalyses the reaction a 1-acyl-sn-glycero-3-phosphoethanolamine + (9Z,12Z)-octadecadienoyl-CoA = 1-acyl-2-(9Z,12Z)-octadecadienoyl-sn-glycero-3-phosphoethanolamine + CoA. The catalysed reaction is 1-(9Z-octadecenoyl)-sn-glycero-3-phosphoethanolamine + (9Z,12Z)-octadecadienoyl-CoA = 1-(9Z)-octadecenoyl-2-(9Z,12Z)-octadecadienoyl-sn-glycero-3-phosphoethanolamine + CoA. It carries out the reaction 1-(10Z-heptadecenoyl)-sn-glycero-3-phosphoethanolamine + (9Z,12Z)-octadecadienoyl-CoA = 1-(10Z-heptadecenoyl)-2-(9Z,12Z-octadecadienoyl)-sn-glycero-3-phosphoethanolamine + CoA. The enzyme catalyses a 1-acyl-sn-glycero-3-phosphoethanolamine + (5Z,8Z,11Z,14Z)-eicosatetraenoyl-CoA = 1-acyl-2-(5Z,8Z,11Z,14Z)-eicosatetraenoyl-sn-glycero-3-phosphoethanolamine + CoA. It catalyses the reaction 1-hexadecanoyl-sn-glycero-3-phosphoethanolamine + (5Z,8Z,11Z,14Z)-eicosatetraenoyl-CoA = 1-hexadecanoyl-2-(5Z,8Z,11Z,14Z-eicosatetraenoyl)-sn-glycero-3-phosphoethanolamine + CoA. The catalysed reaction is 1-(9Z-octadecenoyl)-sn-glycero-3-phosphoethanolamine + (5Z,8Z,11Z,14Z)-eicosatetraenoyl-CoA = 1-(9Z)-octadecenoyl-2-(5Z,8Z,11Z,14Z)-eicosatetraenoyl-sn-glycero-3-phosphoethanolamine + CoA. It carries out the reaction 1-(10Z-heptadecenoyl)-sn-glycero-3-phosphoethanolamine + (5Z,8Z,11Z,14Z)-eicosatetraenoyl-CoA = 1-(10Z-heptadecenoyl)-2-(5Z,8Z,11Z,14Z-eicosatetraenoyl)-sn-glycero-3-phosphoethanolamine + CoA. The enzyme catalyses a 1-O-(1Z-alkenyl)-sn-glycero-3-phosphoethanolamine + (5Z,8Z,11Z,14Z)-eicosatetraenoyl-CoA = 1-O-(1Z)-alkenyl-2-(5Z,8Z,11Z,14Z)-eicosatetraenoyl-sn-glycero-3-phosphoethanolamine + CoA. It catalyses the reaction a 1-acyl-sn-glycero-3-phospho-L-serine + (9Z,12Z)-octadecadienoyl-CoA = 1-acyl-2-(9Z,12Z-octadecadienoyl)-sn-glycero-3-phospho-L-serine + CoA. The catalysed reaction is a 1-acyl-sn-glycero-3-phospho-L-serine + (5Z,8Z,11Z,14Z)-eicosatetraenoyl-CoA = 1-acyl-2-(5Z,8Z,11Z,14Z-eicosatetraenoyl)-sn-glycero-3-phospho-L-serine + CoA. It carries out the reaction 1-hexadecanoyl-sn-glycero-3-phospho-L-serine + (9Z)-octadecenoyl-CoA = 1-hexadecanoyl-2-(9Z-octadecenoyl)-sn-glycero-3-phospho-L-serine + CoA. The enzyme catalyses 1-(9Z-octadecenoyl)-sn-glycero-3-phospho-L-serine + (9Z)-octadecenoyl-CoA = 1,2-di-(9Z)-octadecenoyl-sn-glycero-3-phospho-L-serine + CoA. It catalyses the reaction 1-hexadecanoyl-sn-glycero-3-phospho-L-serine + (9Z,12Z)-octadecadienoyl-CoA = 1-hexadecanoyl-2-(9Z,12Z-octadecadienoyl)-sn-glycero-3-phospho-L-serine + CoA. The catalysed reaction is 1-(9Z-octadecenoyl)-sn-glycero-3-phospho-L-serine + (9Z,12Z)-octadecadienoyl-CoA = 1-(9Z-octadecenoyl)-2-(9Z,12Z-octadienoyl)-sn-glycero-3-phospho-L-serine + CoA. It carries out the reaction 1-hexadecanoyl-sn-glycero-3-phospho-L-serine + (5Z,8Z,11Z,14Z)-eicosatetraenoyl-CoA = 1-hexadecanoyl-2-(5Z,8Z,11Z,14Z-eicosatetraenoyl)-sn-glycero-3-phospho-L-serine + CoA. The enzyme catalyses 1-(9Z-octadecenoyl)-sn-glycero-3-phospho-L-serine + (5Z,8Z,11Z,14Z)-eicosatetraenoyl-CoA = 1-(9Z-octadecenoyl)-2-(5Z,8Z,11Z,14Z-eicosatetraenoyl)-sn-glycero-3-phospho-L-serine + CoA. The protein operates within lipid metabolism; phospholipid metabolism. In terms of biological role, lysophospholipid O-acyltransferase (LPLAT) that catalyzes the reacylation step of the phospholipid remodeling process also known as the Lands cycle. Catalyzes transfer of the fatty acyl chain from fatty acyl-CoA to 1-acyl lysophospholipid to form various classes of phospholipids. Converts 1-acyl lysophosphatidylcholine (LPC) into phosphatidylcholine (PC) (LPCAT activity), 1-acyl lysophosphatidylserine (LPS) into phosphatidylserine (PS) (LPSAT activity) and 1-acyl lysophosphatidylethanolamine (LPE) into phosphatidylethanolamine (PE) (LPEAT activity). Favors polyunsaturated fatty acyl-CoAs as acyl donors compared to saturated fatty acyl-CoAs. Has higher activity for LPC acyl acceptors compared to LPEs and LPSs. Can also transfer the fatty acyl chain from fatty acyl-CoA to 1-O-alkyl lysophospholipid or 1-O-alkenyl lysophospholipid with lower efficiency. Acts as a major LPC O-acyltransferase in liver and intestine. As a component of the liver X receptor/NR1H3 or NR1H2 signaling pathway, mainly catalyzes the incorporation of arachidonate into PCs of endoplasmic reticulum (ER) membranes, increasing membrane dynamics and enabling triacylglycerols transfer to nascent very low-density lipoprotein (VLDL) particles. Promotes processing of sterol regulatory protein SREBF1 in hepatocytes, likely by facilitating the translocation of SREBF1-SCAP complex from ER to the Golgi apparatus. Participates in mechanisms by which the liver X receptor/NR1H3 or NR1H2 signaling pathway counteracts lipid-induced ER stress response and inflammation. Down-regulates hepatic inflammation by limiting arachidonic acid availability for synthesis of inflammatory eicosanoids, such as prostaglandins. In enterocytes, acts as a component of a gut-brain feedback loop that coordinates dietary lipid absorption and food intake. Regulates the abundance of PCs containing linoleate and arachidonate in enterocyte membranes, enabling passive diffusion of fatty acids and cholesterol across the membrane for efficient chylomicron assembly. In the intestinal crypt, acts as a component of dietary-responsive phospholipid-cholesterol axis, regulating the biosynthesis of cholesterol and its mitogenic effects on intestinal stem cells. In Mus musculus (Mouse), this protein is Lysophospholipid acyltransferase 5 (Lpcat3).